Reading from the N-terminus, the 158-residue chain is Probable deoxyuridine 5'-triphosphate nucleotidohydrolase (158 aa).

It belongs to the dUTPase family. Mg(2+) is required as a cofactor.

It carries out the reaction dUTP + H2O = dUMP + diphosphate + H(+). Its pathway is pyrimidine metabolism; dUMP biosynthesis; dUMP from dCTP (dUTP route): step 1/2. Functionally, this enzyme is involved in nucleotide metabolism: it produces dUMP, the immediate precursor of thymidine nucleotides and it decreases the intracellular concentration of dUTP so that uracil cannot be incorporated into DNA. It does probably not deaminate dCTP. In Sulfolobus islandicus rod-shaped virus 1 (SIRV-1), this protein is Probable deoxyuridine 5'-triphosphate nucleotidohydrolase.